A 418-amino-acid chain; its full sequence is 26S proteasome regulatory subunit 6B (418 aa).

Met-1 carries the N-acetylmethionine modification. Ser-21 is subject to Phosphoserine. Thr-25 carries the post-translational modification Phosphothreonine. The residue at position 28 (Ser-28) is a Phosphoserine. 206 to 213 contacts ATP; sequence GPPGCGKT. N6-acetyllysine occurs at positions 397 and 401.

Belongs to the AAA ATPase family. Component of the 19S proteasome regulatory particle complex. The 26S proteasome consists of a 20S core particle (CP) and two 19S regulatory subunits (RP). The regulatory particle is made of a lid composed of 9 subunits, a base containing 6 ATPases including PSMC4 and few additional components. Interacts with NR1I3. Interacts with PAAF1. Interacts with TRIM5. Interacts with ZFAND1.

The protein localises to the cytoplasm. The protein resides in the nucleus. Its function is as follows. Component of the 26S proteasome, a multiprotein complex involved in the ATP-dependent degradation of ubiquitinated proteins. This complex plays a key role in the maintenance of protein homeostasis by removing misfolded or damaged proteins, which could impair cellular functions, and by removing proteins whose functions are no longer required. Therefore, the proteasome participates in numerous cellular processes, including cell cycle progression, apoptosis, or DNA damage repair. PSMC4 belongs to the heterohexameric ring of AAA (ATPases associated with diverse cellular activities) proteins that unfolds ubiquitinated target proteins that are concurrently translocated into a proteolytic chamber and degraded into peptides. This is 26S proteasome regulatory subunit 6B (Psmc4) from Mus musculus (Mouse).